A 456-amino-acid polypeptide reads, in one-letter code: 3-isopropylmalate dehydratase large subunit (456 aa).

Residues Cys-336, Cys-396, and Cys-399 each contribute to the [4Fe-4S] cluster site.

It belongs to the aconitase/IPM isomerase family. LeuC type 1 subfamily. In terms of assembly, heterodimer of LeuC and LeuD. [4Fe-4S] cluster serves as cofactor.

The catalysed reaction is (2R,3S)-3-isopropylmalate = (2S)-2-isopropylmalate. The protein operates within amino-acid biosynthesis; L-leucine biosynthesis; L-leucine from 3-methyl-2-oxobutanoate: step 2/4. Functionally, catalyzes the isomerization between 2-isopropylmalate and 3-isopropylmalate, via the formation of 2-isopropylmaleate. In Staphylococcus epidermidis (strain ATCC 35984 / DSM 28319 / BCRC 17069 / CCUG 31568 / BM 3577 / RP62A), this protein is 3-isopropylmalate dehydratase large subunit.